We begin with the raw amino-acid sequence, 296 residues long: Homoserine kinase (296 aa).

84–94 (PLARGLGSSSS) is a binding site for ATP.

It belongs to the GHMP kinase family. Homoserine kinase subfamily.

Its subcellular location is the cytoplasm. It carries out the reaction L-homoserine + ATP = O-phospho-L-homoserine + ADP + H(+). The protein operates within amino-acid biosynthesis; L-threonine biosynthesis; L-threonine from L-aspartate: step 4/5. Catalyzes the ATP-dependent phosphorylation of L-homoserine to L-homoserine phosphate. The polypeptide is Homoserine kinase (Lactococcus lactis subsp. lactis (strain IL1403) (Streptococcus lactis)).